Reading from the N-terminus, the 295-residue chain is Tyrosine recombinase XerC (295 aa).

The Core-binding (CB) domain maps to 1–85 (MHILLQKYYN…ALRQFLNYLV (85 aa)). The 180-residue stretch at 106-285 (YLPKNMDMEQ…DFQHLAQVYD (180 aa)) folds into the Tyr recombinase domain. Residues Arg145, Lys169, His237, Arg240, and His263 contribute to the active site. Residue Tyr272 is the O-(3'-phospho-DNA)-tyrosine intermediate of the active site.

It belongs to the 'phage' integrase family. XerC subfamily. In terms of assembly, forms a cyclic heterotetrameric complex composed of two molecules of XerC and two molecules of XerD.

It localises to the cytoplasm. Its function is as follows. Site-specific tyrosine recombinase, which acts by catalyzing the cutting and rejoining of the recombining DNA molecules. The XerC-XerD complex is essential to convert dimers of the bacterial chromosome into monomers to permit their segregation at cell division. It also contributes to the segregational stability of plasmids. The polypeptide is Tyrosine recombinase XerC (Histophilus somni (strain 2336) (Haemophilus somnus)).